Consider the following 156-residue polypeptide: Small ribosomal subunit protein uS7 (156 aa).

This sequence belongs to the universal ribosomal protein uS7 family. In terms of assembly, part of the 30S ribosomal subunit. Contacts proteins S9 and S11.

Functionally, one of the primary rRNA binding proteins, it binds directly to 16S rRNA where it nucleates assembly of the head domain of the 30S subunit. Is located at the subunit interface close to the decoding center, probably blocks exit of the E-site tRNA. The protein is Small ribosomal subunit protein uS7 of Nitratidesulfovibrio vulgaris (strain ATCC 29579 / DSM 644 / CCUG 34227 / NCIMB 8303 / VKM B-1760 / Hildenborough) (Desulfovibrio vulgaris).